Consider the following 274-residue polypeptide: D-aminopeptidase (274 aa).

Asp8, Glu10, His60, and His104 together coordinate Zn(2+). The Nucleophile role is filled by His115. Glu133 contacts Zn(2+).

It belongs to the peptidase M55 family. Homodecamer. A 20 Angstroms wide channel runs through the complex, giving access to a central chamber holding the active sites. Zn(2+) is required as a cofactor.

Its function is as follows. Hydrolyzes N-terminal residues in D-amino acid containing peptides. Among the tested substrates, the highest activities are with D-Ala-D-Ala and D-Ala-Gly-Gly. The physiological role is not clear. In Bacillus subtilis (strain 168), this protein is D-aminopeptidase (dppA).